The sequence spans 102 residues: Small ribosomal subunit protein uS14 (102 aa).

It belongs to the universal ribosomal protein uS14 family. As to quaternary structure, part of the 30S ribosomal subunit. Contacts proteins S3 and S10.

Its function is as follows. Binds 16S rRNA, required for the assembly of 30S particles and may also be responsible for determining the conformation of the 16S rRNA at the A site. This Dichelobacter nodosus (strain VCS1703A) protein is Small ribosomal subunit protein uS14.